The following is a 462-amino-acid chain: Exodeoxyribonuclease 7 large subunit (462 aa).

This sequence belongs to the XseA family. Heterooligomer composed of large and small subunits.

Its subcellular location is the cytoplasm. The catalysed reaction is Exonucleolytic cleavage in either 5'- to 3'- or 3'- to 5'-direction to yield nucleoside 5'-phosphates.. Bidirectionally degrades single-stranded DNA into large acid-insoluble oligonucleotides, which are then degraded further into small acid-soluble oligonucleotides. This is Exodeoxyribonuclease 7 large subunit from Pectobacterium carotovorum subsp. carotovorum (strain PC1).